Reading from the N-terminus, the 21-residue chain is Alpha-fibrinogenase A1 (21 aa).

It belongs to the peptidase S1 family. Snake venom subfamily. In terms of assembly, monomer. As to expression, expressed by the venom gland.

It is found in the secreted. Its activity is regulated as follows. Inhibited by PMSF, bovine aprotinin (APR), and soybean trypsin inhibitor (STI). Is not inhibited by EDTA, beta-mercaptoethanol, and high temperature (85 degrees Celsius). Snake venom serine protease that completely cleaves fibrinogen Aalpha chain (FGA), partially cleaves Bbeta chain (FGB) and has no activity on gamma chain. Is more potent that A2 and A3 alpha-fibrinogenases. Very active within 5 minutes. The sequence is that of Alpha-fibrinogenase A1 from Crotalus atrox (Western diamondback rattlesnake).